The primary structure comprises 181 residues: Oligoribonuclease (181 aa).

One can recognise an Exonuclease domain in the interval 8-171 (LIWLDLEMTG…DDIKESIAEL (164 aa)). Tyr129 is a catalytic residue.

This sequence belongs to the oligoribonuclease family.

The protein localises to the cytoplasm. Its function is as follows. 3'-to-5' exoribonuclease specific for small oligoribonucleotides. The polypeptide is Oligoribonuclease (Colwellia psychrerythraea (strain 34H / ATCC BAA-681) (Vibrio psychroerythus)).